A 197-amino-acid chain; its full sequence is UPF0251 protein CT1277 (197 aa).

Residues 138–197 are disordered; it reads GGGFGGGRRGGGKCRGFRSGLDRGPGHGEGRCQGEGHGNGNGNGNGQGRMRRNQQEGGEV. Positions 157–171 are enriched in basic and acidic residues; sequence GLDRGPGHGEGRCQG. The span at 172 to 184 shows a compositional bias: gly residues; that stretch reads EGHGNGNGNGNGQ.

The protein belongs to the UPF0251 family.

This Chlorobaculum tepidum (strain ATCC 49652 / DSM 12025 / NBRC 103806 / TLS) (Chlorobium tepidum) protein is UPF0251 protein CT1277.